The chain runs to 135 residues: Class I hydrophobin dewB (135 aa).

A signal peptide spans 1–17 (MKFIGLATLSLFALASA). Intrachain disulfides connect cysteine 35-cysteine 109, cysteine 43-cysteine 103, cysteine 44-cysteine 84, and cysteine 110-cysteine 128.

It belongs to the fungal hydrophobin family. As to quaternary structure, self-assembles to form functional amyloid fibrils called rodlets. Self-assembly into fibrillar rodlets occurs spontaneously at hydrophobic:hydrophilic interfaces and the rodlets further associate laterally to form amphipathic monolayers.

The protein resides in the secreted. Its subcellular location is the spore wall. Its function is as follows. Aerial growth, conidiation, and dispersal of filamentous fungi in the environment rely upon a capability of their secreting small amphipathic proteins called hydrophobins (HPBs) with low sequence identity. Class I can self-assemble into an outermost layer of rodlet bundles on aerial cell surfaces, conferring cellular hydrophobicity that supports fungal growth, development and dispersal; whereas Class II form highly ordered films at water-air interfaces through intermolecular interactions but contribute nothing to the rodlet structure. DewB is a class I hydrophobin that contributes to the hydrophobicity of the spore surface. In Emericella nidulans (strain FGSC A4 / ATCC 38163 / CBS 112.46 / NRRL 194 / M139) (Aspergillus nidulans), this protein is Class I hydrophobin dewB.